The primary structure comprises 331 residues: L-lactate dehydrogenase A chain (331 aa).

Residues 29–57 and Arg-98 contribute to the NAD(+) site; that span reads GMVG…MEDK. Residues Arg-105, Asn-137, and Arg-168 each contribute to the substrate site. Residue Asn-137 participates in NAD(+) binding. His-192 serves as the catalytic Proton acceptor. Thr-247 provides a ligand contact to substrate.

It belongs to the LDH/MDH superfamily. LDH family. As to quaternary structure, homotetramer.

The protein resides in the cytoplasm. The catalysed reaction is (S)-lactate + NAD(+) = pyruvate + NADH + H(+). The protein operates within fermentation; pyruvate fermentation to lactate; (S)-lactate from pyruvate: step 1/1. Functionally, interconverts simultaneously and stereospecifically pyruvate and lactate with concomitant interconversion of NADH and NAD(+). The sequence is that of L-lactate dehydrogenase A chain (ldha) from Champsocephalus gunnari (Mackerel icefish).